A 434-amino-acid polypeptide reads, in one-letter code: ATP-dependent protease ATPase subunit HslU (434 aa).

Residues V18, 60–65 (GVGKTE), D247, E312, and R384 contribute to the ATP site.

The protein belongs to the ClpX chaperone family. HslU subfamily. In terms of assembly, a double ring-shaped homohexamer of HslV is capped on each side by a ring-shaped HslU homohexamer. The assembly of the HslU/HslV complex is dependent on binding of ATP.

The protein localises to the cytoplasm. Functionally, ATPase subunit of a proteasome-like degradation complex; this subunit has chaperone activity. The binding of ATP and its subsequent hydrolysis by HslU are essential for unfolding of protein substrates subsequently hydrolyzed by HslV. HslU recognizes the N-terminal part of its protein substrates and unfolds these before they are guided to HslV for hydrolysis. This is ATP-dependent protease ATPase subunit HslU from Rhodopseudomonas palustris (strain BisB18).